The following is an 839-amino-acid chain: LPS-assembly protein LptD (839 aa).

The signal sequence occupies residues 1-21 (MAIGITACVLSLINYQGLAYS).

The protein belongs to the LptD family. As to quaternary structure, component of the lipopolysaccharide transport and assembly complex. Interacts with LptE and LptA.

The protein resides in the cell outer membrane. Its function is as follows. Together with LptE, is involved in the assembly of lipopolysaccharide (LPS) at the surface of the outer membrane. The sequence is that of LPS-assembly protein LptD from Legionella pneumophila subsp. pneumophila (strain Philadelphia 1 / ATCC 33152 / DSM 7513).